The following is a 426-amino-acid chain: DNA primase DnaG (426 aa).

Residues 171–245 (DTVILVEGRA…KVDFVARAPP (75 aa)) enclose the Toprim domain. Mg(2+)-binding residues include E177, D219, and D221. Positions 407-426 (KSEENIQESVSTGESAQTSP) are disordered. Residues 413 to 426 (QESVSTGESAQTSP) show a composition bias toward polar residues.

The protein belongs to the archaeal DnaG primase family. Forms a ternary complex with MCM helicase and DNA. Component of the archaeal exosome complex. Mg(2+) serves as cofactor.

The enzyme catalyses ssDNA + n NTP = ssDNA/pppN(pN)n-1 hybrid + (n-1) diphosphate.. Functionally, RNA polymerase that catalyzes the synthesis of short RNA molecules used as primers for DNA polymerase during DNA replication. Also part of the exosome, which is a complex involved in RNA degradation. Acts as a poly(A)-binding protein that enhances the interaction between heteromeric, adenine-rich transcripts and the exosome. The chain is DNA primase DnaG from Thermofilum pendens (strain DSM 2475 / Hrk 5).